Here is a 339-residue protein sequence, read N- to C-terminus: MKLAVIDGDGIGVEVTAEALKVLKAVRDDVETTEYDLGARRYLRNGETLTDADLESLKQHDAILLGAIGDPRTVPAGVLERGLLLPLRFKLDHAVNLRPSKLYPGASSPLKNAGEIDFVVVREGTEGLYCGNGGTLREGTDHEVASEVSQNTWFGVERVVRDAFRRAQERRKKLTWVHKTNVLVNAGGLWQRAIETIGKEFPDVEVDYNHIDAATIYMVTDPSRYDVIVTDNLFGDILTDLAGAVTGGIGLAASGNIDPTHNNPSMFEPVHGSAPDIAGQGIADPCAAILSVALMLRHLGDEANAEKIEKAVLDEAAGRDGSPIRTTEVGDRIAAAVQA.

Arg-88, Arg-98, Arg-122, and Asp-212 together coordinate substrate. Residues Asp-212, Asp-236, and Asp-240 each contribute to the Mg(2+) site. 272–284 (GSAPDIAGQGIAD) is a binding site for NAD(+).

The protein belongs to the isocitrate and isopropylmalate dehydrogenases family. LeuB type 2 subfamily. Homodimer. Mg(2+) serves as cofactor. Mn(2+) is required as a cofactor.

It is found in the cytoplasm. It catalyses the reaction (2R,3S)-3-isopropylmalate + NAD(+) = 4-methyl-2-oxopentanoate + CO2 + NADH. Its pathway is amino-acid biosynthesis; L-leucine biosynthesis; L-leucine from 3-methyl-2-oxobutanoate: step 3/4. Catalyzes the oxidation of 3-carboxy-2-hydroxy-4-methylpentanoate (3-isopropylmalate) to 3-carboxy-4-methyl-2-oxopentanoate. The product decarboxylates to 4-methyl-2 oxopentanoate. This is 3-isopropylmalate dehydrogenase from Corynebacterium urealyticum (strain ATCC 43042 / DSM 7109).